Reading from the N-terminus, the 419-residue chain is Aminoacyltransferase FemB (419 aa).

This sequence belongs to the FemABX family. Homodimer. Interacts with FemA.

It is found in the cytoplasm. It carries out the reaction MurNAc-L-Ala-D-isoglutaminyl-L-Lys-(N(6)-tri-Gly)-D-Ala-D-Ala-diphospho-di-trans,octa-cis-undecaprenyl-GlcNAc + 2 glycyl-tRNA(Gly) = MurNAc-L-Ala-D-isoglutaminyl-L-Lys-(N(6)-penta-Gly)-D-Ala-D-Ala-diphospho-di-trans,octa-cis-undecaprenyl-GlcNAc + 2 tRNA(Gly) + 2 H(+). Functionally, catalyzes the formation of the pentaglycine interpeptide bridge, which is characteristic of the S.aureus peptidoglycan. Adds glycines 4 and 5 of the pentaglycine bridge, using glycyl-tRNA(Gly) as donor. Involved in resistance to methicillin. This chain is Aminoacyltransferase FemB (femB), found in Staphylococcus aureus (strain MW2).